Reading from the N-terminus, the 64-residue chain is Large ribosomal subunit protein bL35 (64 aa).

This sequence belongs to the bacterial ribosomal protein bL35 family.

This Leifsonia xyli subsp. xyli (strain CTCB07) protein is Large ribosomal subunit protein bL35.